The sequence spans 500 residues: Probable cytosol aminopeptidase (500 aa).

Residues Lys264 and Asp269 each contribute to the Mn(2+) site. The active site involves Lys276. Residues Asp287, Asp346, and Glu348 each coordinate Mn(2+). Arg350 is an active-site residue.

It belongs to the peptidase M17 family. The cofactor is Mn(2+).

The protein resides in the cytoplasm. The catalysed reaction is Release of an N-terminal amino acid, Xaa-|-Yaa-, in which Xaa is preferably Leu, but may be other amino acids including Pro although not Arg or Lys, and Yaa may be Pro. Amino acid amides and methyl esters are also readily hydrolyzed, but rates on arylamides are exceedingly low.. It catalyses the reaction Release of an N-terminal amino acid, preferentially leucine, but not glutamic or aspartic acids.. Its function is as follows. Presumably involved in the processing and regular turnover of intracellular proteins. Catalyzes the removal of unsubstituted N-terminal amino acids from various peptides. The sequence is that of Probable cytosol aminopeptidase from Nitrobacter winogradskyi (strain ATCC 25391 / DSM 10237 / CIP 104748 / NCIMB 11846 / Nb-255).